A 424-amino-acid polypeptide reads, in one-letter code: Histidine--tRNA ligase (424 aa).

It belongs to the class-II aminoacyl-tRNA synthetase family. Homodimer.

The protein localises to the cytoplasm. The catalysed reaction is tRNA(His) + L-histidine + ATP = L-histidyl-tRNA(His) + AMP + diphosphate + H(+). The polypeptide is Histidine--tRNA ligase (Salmonella typhi).